The sequence spans 346 residues: Annexin A1 (346 aa).

N-acetylalanine is present on alanine 2. Serine 5 is modified (phosphoserine; by TRPM7). Glutamine 19 is covalently cross-linked (Isoglutamyl lysine isopeptide (Gln-Lys) (interchain with K-?)). Tyrosine 21 carries the phosphotyrosine; by EGFR modification. Phosphoserine is present on residues serine 34 and serine 37. Residue threonine 41 is modified to Phosphothreonine. Annexin repeat units lie at residues 42–113, 114–185, 197–269, and 273–344; these read FNPS…ALLK, TPAQ…SLAK, DLAD…VIVK, and SQPM…ALCG. Lysine 58 is subject to N6-acetyllysine. Ca(2+) contacts are provided by glycine 59, valine 60, glutamate 62, lysine 97, leucine 100, glutamate 105, methionine 127, glycine 129, glycine 131, threonine 132, and glutamate 134. Threonine 136 is subject to Phosphothreonine. The Ca(2+) site is built by aspartate 171, glycine 210, and arginine 213. A Glycyl lysine isopeptide (Lys-Gly) (interchain with G-Cter in SUMO1); alternate cross-link involves residue lysine 214. Residue lysine 214 forms a Glycyl lysine isopeptide (Lys-Gly) (interchain with G-Cter in SUMO2); alternate linkage. Glycine 215 provides a ligand contact to Ca(2+). At lysine 239 the chain carries N6-acetyllysine. Positions 253, 255, and 256 each coordinate Ca(2+). A Glycyl lysine isopeptide (Lys-Gly) (interchain with G-Cter in SUMO1) cross-link involves residue lysine 257. Glutamate 261, methionine 286, glycine 288, and glycine 290 together coordinate Ca(2+). Position 312 is an N6-acetyllysine (lysine 312). Residues cysteine 324 and cysteine 343 are joined by a disulfide bond. 3 residues coordinate Ca(2+): leucine 328, glutamate 330, and threonine 331. Lysine 332 participates in a covalent cross-link: Glycyl lysine isopeptide (Lys-Gly) (interchain with G-Cter in SUMO1). Glutamate 336 contributes to the Ca(2+) binding site.

It belongs to the annexin family. As to quaternary structure, homodimer; non-covalently linked. Homodimer; linked by transglutamylation. Homodimers linked by transglutamylation are observed in placenta, but not in other tissues. Interacts with S100A11. Heterotetramer, formed by two molecules each of S100A11 and ANXA1. Interacts with DYSF. Interacts with EGFR. Phosphorylated by protein kinase C, EGFR and TRPM7. Phosphorylated in response to EGF treatment. In terms of processing, sumoylated. Post-translationally, proteolytically cleaved by cathepsin CTSG to release the active N-terminal peptide Ac2-26. Detected on surface epithelia and mucosal glands in nasal cavity, trachea, bronchi and bronchioles. Detected in blood vessel endothelial cells. Detected in neutrophils (at protein level).

The protein localises to the nucleus. Its subcellular location is the cytoplasm. It is found in the cell projection. It localises to the cilium. The protein resides in the basolateral cell membrane. The protein localises to the lateral cell membrane. Its subcellular location is the cell membrane. It is found in the apical cell membrane. It localises to the membrane. The protein resides in the endosome membrane. The protein localises to the secreted. Its subcellular location is the extracellular space. It is found in the early endosome. It localises to the cytoplasmic vesicle membrane. The protein resides in the extracellular exosome. The protein localises to the cytoplasmic vesicle. Its subcellular location is the secretory vesicle lumen. It is found in the phagocytic cup. Its function is as follows. Plays important roles in the innate immune response as effector of glucocorticoid-mediated responses and regulator of the inflammatory process. Has anti-inflammatory activity. Plays a role in glucocorticoid-mediated down-regulation of the early phase of the inflammatory response. Contributes to the adaptive immune response by enhancing signaling cascades that are triggered by T-cell activation, regulates differentiation and proliferation of activated T-cells. Promotes the differentiation of T-cells into Th1 cells and negatively regulates differentiation into Th2 cells. Has no effect on unstimulated T-cells. Negatively regulates hormone exocytosis via activation of the formyl peptide receptors and reorganization of the actin cytoskeleton. Has high affinity for Ca(2+) and can bind up to eight Ca(2+) ions. Displays Ca(2+)-dependent binding to phospholipid membranes. Plays a role in the formation of phagocytic cups and phagosomes. Plays a role in phagocytosis by mediating the Ca(2+)-dependent interaction between phagosomes and the actin cytoskeleton. In terms of biological role, functions at least in part by activating the formyl peptide receptors and downstream signaling cascades. Promotes chemotaxis of granulocytes and monocytes via activation of the formyl peptide receptors. Promotes rearrangement of the actin cytoskeleton, cell polarization and cell migration. Promotes resolution of inflammation and wound healing. Acts via neutrophil N-formyl peptide receptors to enhance the release of CXCL2. The sequence is that of Annexin A1 (ANXA1) from Bos taurus (Bovine).